Consider the following 348-residue polypeptide: NADH-ubiquinone oxidoreductase chain 2 (348 aa).

11 helical membrane passes run 1–21 (MMTLILILGIFLGTMTTMFSS), 23–43 (WFFAWLGLEINMMAIIPMMLF), 56–76 (YFISQAVASSTIILASSWNYF), 92–112 (ITLIILALLLKLGLAPLHFWL), 123–143 (MGLIISTWQKLAPLTLLIQVS), 148–168 (NMYILISISVMSVLAGGFGGL), 176–196 (LLAYSSISHMGWIVGVMAVSA), 198–218 (LSWVTTVIYLIINFSIFTILI), 242–262 (CILVLLSLGGLPPFTGFFLKL), 272–292 (SLILMTILLMAGSLISLFFYL), and 321–341 (LLFNLMFLFSILLLPLSPFMI).

It belongs to the complex I subunit 2 family.

The protein resides in the mitochondrion inner membrane. The enzyme catalyses a ubiquinone + NADH + 5 H(+)(in) = a ubiquinol + NAD(+) + 4 H(+)(out). Functionally, core subunit of the mitochondrial membrane respiratory chain NADH dehydrogenase (Complex I) that is believed to belong to the minimal assembly required for catalysis. Complex I functions in the transfer of electrons from NADH to the respiratory chain. The immediate electron acceptor for the enzyme is believed to be ubiquinone. The sequence is that of NADH-ubiquinone oxidoreductase chain 2 (MT-ND2) from Myxine glutinosa (Atlantic hagfish).